The chain runs to 144 residues: NADH dehydrogenase [ubiquinone] 1 alpha subcomplex subunit 13 (144 aa).

A2 carries the post-translational modification N-acetylalanine. The chain crosses the membrane as a helical span at residues 30–51 (LSGYSMFAVGIGALLFGYWSMM).

In terms of assembly, complex I is composed of 45 different subunits. Interacts with CARD15, but not with CARD4. Interacts with STAT3, but not with STAT1, STAT2 and STAT5A. Interacts with OLFM4.

The protein resides in the mitochondrion inner membrane. Its subcellular location is the nucleus. Accessory subunit of the mitochondrial membrane respiratory chain NADH dehydrogenase (Complex I), that is believed not to be involved in catalysis. Complex I functions in the transfer of electrons from NADH to the respiratory chain. The immediate electron acceptor for the enzyme is believed to be ubiquinone. Involved in the interferon/all-trans-retinoic acid (IFN/RA) induced cell death. This apoptotic activity is inhibited by interaction with viral IRF1. Prevents the transactivation of STAT3 target genes. May play a role in CARD15-mediated innate mucosal responses and serve to regulate intestinal epithelial cell responses to microbes. In Bos taurus (Bovine), this protein is NADH dehydrogenase [ubiquinone] 1 alpha subcomplex subunit 13 (NDUFA13).